We begin with the raw amino-acid sequence, 622 residues long: Glutamyl-tRNA(Gln) amidotransferase subunit E (622 aa).

It belongs to the GatB/GatE family. GatE subfamily. Heterodimer of GatD and GatE.

The enzyme catalyses L-glutamyl-tRNA(Gln) + L-glutamine + ATP + H2O = L-glutaminyl-tRNA(Gln) + L-glutamate + ADP + phosphate + H(+). In terms of biological role, allows the formation of correctly charged Gln-tRNA(Gln) through the transamidation of misacylated Glu-tRNA(Gln) in organisms which lack glutaminyl-tRNA synthetase. The reaction takes place in the presence of glutamine and ATP through an activated gamma-phospho-Glu-tRNA(Gln). The GatDE system is specific for glutamate and does not act on aspartate. The protein is Glutamyl-tRNA(Gln) amidotransferase subunit E of Halobacterium salinarum (strain ATCC 29341 / DSM 671 / R1).